Consider the following 451-residue polypeptide: Phosphoglucosamine mutase (451 aa).

Ser107 serves as the catalytic Phosphoserine intermediate. Mg(2+) contacts are provided by Ser107, Asp246, Asp248, and Asp250. Ser107 is modified (phosphoserine).

It belongs to the phosphohexose mutase family. The cofactor is Mg(2+). Post-translationally, activated by phosphorylation.

The catalysed reaction is alpha-D-glucosamine 1-phosphate = D-glucosamine 6-phosphate. Its function is as follows. Catalyzes the conversion of glucosamine-6-phosphate to glucosamine-1-phosphate. This chain is Phosphoglucosamine mutase, found in Burkholderia cenocepacia (strain ATCC BAA-245 / DSM 16553 / LMG 16656 / NCTC 13227 / J2315 / CF5610) (Burkholderia cepacia (strain J2315)).